The primary structure comprises 152 residues: D-erythrulose-4-phosphate isomerase 2 (152 aa).

The active-site Proton acceptor is the cysteine 70.

The protein belongs to the LacAB/RpiB family.

The enzyme catalyses D-erythrulose 4-phosphate = D-erythrose 4-phosphate. Its pathway is carbohydrate metabolism; erythritol degradation. It participates in carbohydrate metabolism; D-threitol degradation. It functions in the pathway carbohydrate metabolism; L-threitol degradation. Functionally, catalyzes the isomerization of D-erythrulose-4P to D-erythrose-4P. Involved in the degradation pathways of L-threitol, D-threitol and erythritol, that allow M.smegmatis to grow on these compounds as the sole carbon source. The protein is D-erythrulose-4-phosphate isomerase 2 of Mycolicibacterium smegmatis (strain ATCC 700084 / mc(2)155) (Mycobacterium smegmatis).